The sequence spans 646 residues: Amyloid beta A4 precursor protein-binding family B member 1-interacting protein (646 aa).

Residues 82–141 form a disordered region; it reads FATERDTSKGSVPVAPAPSKPQSNFSLPASFDSSKPATSSNSIAAPPPPPAFKPSKEEEE. The span at 101–116 shows a compositional bias: polar residues; sequence KPQSNFSLPASFDSSK. A Ras-associating domain is found at 162–248; that stretch reads KKLVVKVEIT…NKVLFQEKKH (87 aa). The PH domain maps to 292 to 401; sequence VPDLEGVLYL…WVTGIRVAKY (110 aa). Residues 420–646 form a disordered region; sequence ASWANRTIQA…NAMQKKRTQP (227 aa). The span at 429–445 shows a compositional bias: low complexity; the sequence is ASSTASTPSPTPKAKAA. Pro residues-rich tracts occupy residues 465-500, 509-536, 560-577, and 584-598; these read LPPPPPSMDFLPPPPPDPMFPPPPPAPPAPPAPPVP, FPPPPKFPQSSFPPPPMDDLPPPPPPPE, LPPPPPDPVASLPPPPPA, and APPPPPPPPPPPAPA.

The protein belongs to the MRL family.

It is found in the cell membrane. The protein resides in the cytoplasm. Its subcellular location is the cytoskeleton. Its function is as follows. Appears to function in the signal transduction from Ras activation to actin cytoskeletal remodeling. This chain is Amyloid beta A4 precursor protein-binding family B member 1-interacting protein (apbb1ip), found in Danio rerio (Zebrafish).